Consider the following 156-residue polypeptide: MSRRREVPKREVIPDARYNDKLVAKFMNCLMVDGKKSLAERVFYGAFDLIEQRTKEDPIKVFKEAVDNVRPTLEVRSRRVGGANYQVPVEVRPVRRQTLAIRWLIGYARSRGEKTMRERLAAELIEASQGRGATIKKRDDTHRMAEANKVFAHYRW.

Belongs to the universal ribosomal protein uS7 family. In terms of assembly, part of the 30S ribosomal subunit. Contacts proteins S9 and S11.

Its function is as follows. One of the primary rRNA binding proteins, it binds directly to 16S rRNA where it nucleates assembly of the head domain of the 30S subunit. Is located at the subunit interface close to the decoding center, probably blocks exit of the E-site tRNA. This chain is Small ribosomal subunit protein uS7, found in Magnetococcus marinus (strain ATCC BAA-1437 / JCM 17883 / MC-1).